The chain runs to 257 residues: tRNA pseudouridine synthase A (257 aa).

Asp53 acts as the Nucleophile in catalysis. Tyr111 contributes to the substrate binding site.

Belongs to the tRNA pseudouridine synthase TruA family. As to quaternary structure, homodimer.

The enzyme catalyses uridine(38/39/40) in tRNA = pseudouridine(38/39/40) in tRNA. Functionally, formation of pseudouridine at positions 38, 39 and 40 in the anticodon stem and loop of transfer RNAs. The polypeptide is tRNA pseudouridine synthase A (Xanthomonas axonopodis pv. citri (strain 306)).